A 339-amino-acid polypeptide reads, in one-letter code: MRVYYDRDADLNLIKSKKVAIIGYGSQGHAHANNLKDSGVSDIVIGLRPTSSAVKKAEEAGFKVMEPGEAAAWADVVMVLTPDEGQGALYKESLEKNLKPGAALAFAHGLSIHFRIIEARPDLDVFLIAPKGPGHTVRSEYLRGGGVPSLVAVAQNASGNALEIALSYASANGGGRAGIIETTFKEEVETDLFGEQAVLCGGLVDLIRAGFETLVEGGYAPEMAYFECLHEMKLIVDLIYEGGIANMNYSISNTAEYGEYVTGPRIITPETKAEMKRVLTDIQDGTFVRNFILENQSGGVGFKAIRARNDAHPIEKTGEKLRAMMPWIAKGKLVDKAKN.

Residues 1 to 182 (MRVYYDRDAD…GGGRAGIIET (182 aa)) enclose the KARI N-terminal Rossmann domain. NADP(+) contacts are provided by residues 24-27 (YGSQ), R48, S51, and 83-86 (DEGQ). Residue H108 is part of the active site. G134 contributes to the NADP(+) binding site. The 146-residue stretch at 183–328 (TFKEEVETDL…EKLRAMMPWI (146 aa)) folds into the KARI C-terminal knotted domain. Mg(2+) contacts are provided by D191, E195, E227, and E231. Residue S252 participates in substrate binding.

The protein belongs to the ketol-acid reductoisomerase family. Requires Mg(2+) as cofactor.

It carries out the reaction (2R)-2,3-dihydroxy-3-methylbutanoate + NADP(+) = (2S)-2-acetolactate + NADPH + H(+). The enzyme catalyses (2R,3R)-2,3-dihydroxy-3-methylpentanoate + NADP(+) = (S)-2-ethyl-2-hydroxy-3-oxobutanoate + NADPH + H(+). Its pathway is amino-acid biosynthesis; L-isoleucine biosynthesis; L-isoleucine from 2-oxobutanoate: step 2/4. It functions in the pathway amino-acid biosynthesis; L-valine biosynthesis; L-valine from pyruvate: step 2/4. Its function is as follows. Involved in the biosynthesis of branched-chain amino acids (BCAA). Catalyzes an alkyl-migration followed by a ketol-acid reduction of (S)-2-acetolactate (S2AL) to yield (R)-2,3-dihydroxy-isovalerate. In the isomerase reaction, S2AL is rearranged via a Mg-dependent methyl migration to produce 3-hydroxy-3-methyl-2-ketobutyrate (HMKB). In the reductase reaction, this 2-ketoacid undergoes a metal-dependent reduction by NADPH to yield (R)-2,3-dihydroxy-isovalerate. This chain is Ketol-acid reductoisomerase (NADP(+)), found in Gluconobacter oxydans (strain 621H) (Gluconobacter suboxydans).